Here is a 561-residue protein sequence, read N- to C-terminus: Rho guanine nucleotide exchange factor 9 (561 aa).

The SH3 domain maps to 53-112 (DSIVSAEAVWDHVTMANRELAFKAGDVIKVLDASNKDWWWGQIDDEEGWFPASFVRLWVN). The interval 145–155 (RDQMRANVINE) is interaction with GPHN. In terms of domain architecture, DH spans 148-332 (MRANVINEIM…RNVTQQINER (185 aa)). Residues 363–470 (ELIYTGEMAW…WLRAFREERK (108 aa)) enclose the PH domain. The disordered stretch occupies residues 499 to 524 (KQKGVNSARSVPPSYPPPQDPLNQGQ). At Ser-547 the chain carries Phosphoserine.

As to quaternary structure, interacts with GPHN.

It is found in the cytoplasm. It localises to the postsynaptic density. Functionally, acts as a guanine nucleotide exchange factor (GEF) for CDC42. Promotes formation of GPHN clusters. This chain is Rho guanine nucleotide exchange factor 9 (ARHGEF9), found in Bos taurus (Bovine).